Consider the following 57-residue polypeptide: Large ribosomal subunit protein bL32 (57 aa).

Basic residues predominate over residues 1 to 16 (MAVQKSRKTPSRRGMR). A disordered region spans residues 1 to 37 (MAVQKSRKTPSRRGMRRSHDALSTTAITVDETTGELH). Over residues 21-31 (ALSTTAITVDE) the composition is skewed to polar residues.

This sequence belongs to the bacterial ribosomal protein bL32 family.

This Hydrogenovibrio crunogenus (strain DSM 25203 / XCL-2) (Thiomicrospira crunogena) protein is Large ribosomal subunit protein bL32.